Here is a 209-residue protein sequence, read N- to C-terminus: Orotate phosphoribosyltransferase (209 aa).

5-phospho-alpha-D-ribose 1-diphosphate contacts are provided by residues Arg-96, Lys-100, His-102, and 122 to 130; that span reads EDLISTGGS. An orotate-binding site is contributed by Ser-126.

It belongs to the purine/pyrimidine phosphoribosyltransferase family. PyrE subfamily. Homodimer. It depends on Mg(2+) as a cofactor.

The enzyme catalyses orotidine 5'-phosphate + diphosphate = orotate + 5-phospho-alpha-D-ribose 1-diphosphate. Its pathway is pyrimidine metabolism; UMP biosynthesis via de novo pathway; UMP from orotate: step 1/2. In terms of biological role, catalyzes the transfer of a ribosyl phosphate group from 5-phosphoribose 1-diphosphate to orotate, leading to the formation of orotidine monophosphate (OMP). This is Orotate phosphoribosyltransferase from Streptococcus sanguinis (strain SK36).